The following is a 75-amino-acid chain: Putative membrane protein insertion efficiency factor (75 aa).

This sequence belongs to the UPF0161 family.

The protein resides in the cell membrane. Its function is as follows. Could be involved in insertion of integral membrane proteins into the membrane. The sequence is that of Putative membrane protein insertion efficiency factor (ytjA) from Bacillus subtilis (strain 168).